A 490-amino-acid chain; its full sequence is tRNA-guanine(15) transglycosylase (490 aa).

The active-site Nucleophile is the Asp-90. Substrate-binding residues include Asp-125 and Ala-193. The Zn(2+) site is built by Cys-276, Cys-278, and Cys-281.

It belongs to the archaeosine tRNA-ribosyltransferase family. Requires Zn(2+) as cofactor.

It catalyses the reaction guanosine(15) in tRNA + 7-cyano-7-deazaguanine = 7-cyano-7-carbaguanosine(15) in tRNA + guanine. The protein operates within tRNA modification; archaeosine-tRNA biosynthesis. In terms of biological role, exchanges the guanine residue with 7-cyano-7-deazaguanine (preQ0) at position 15 in the dihydrouridine loop (D-loop) of archaeal tRNAs. The sequence is that of tRNA-guanine(15) transglycosylase from Methanosarcina acetivorans (strain ATCC 35395 / DSM 2834 / JCM 12185 / C2A).